The chain runs to 529 residues: Bifunctional purine biosynthesis protein PurH (529 aa).

Positions 1–148 (MQQRRPVRRA…KNHKDVAIVV (148 aa)) constitute an MGS-like domain. Lys-287 bears the N6-acetyllysine mark.

It belongs to the PurH family.

The catalysed reaction is (6R)-10-formyltetrahydrofolate + 5-amino-1-(5-phospho-beta-D-ribosyl)imidazole-4-carboxamide = 5-formamido-1-(5-phospho-D-ribosyl)imidazole-4-carboxamide + (6S)-5,6,7,8-tetrahydrofolate. It carries out the reaction IMP + H2O = 5-formamido-1-(5-phospho-D-ribosyl)imidazole-4-carboxamide. It participates in purine metabolism; IMP biosynthesis via de novo pathway; 5-formamido-1-(5-phospho-D-ribosyl)imidazole-4-carboxamide from 5-amino-1-(5-phospho-D-ribosyl)imidazole-4-carboxamide (10-formyl THF route): step 1/1. It functions in the pathway purine metabolism; IMP biosynthesis via de novo pathway; IMP from 5-formamido-1-(5-phospho-D-ribosyl)imidazole-4-carboxamide: step 1/1. The sequence is that of Bifunctional purine biosynthesis protein PurH from Escherichia coli (strain 55989 / EAEC).